Here is a 317-residue protein sequence, read N- to C-terminus: MRFSTQMMYQQNMRGITNSQAEWMKYGEQMSTGKRVVNPSDDPIAASQAVVLSQAQAQNSQYTLARTFATQKVSLEESVLSQVTTAIQNAQEKIVYASNGTLSDDDRASLATDIQGLRDQLLNLANTTDGNGRYIFAGYKTETAPFSEEKGKYVGGAESIKQQVDASRSMVIGHTGDKIFDSITSNAVAEPDGSASETNLFAMLDSAIAALKTPVADSEADKETAAAALDKTNRGLKNSLNNVLTVRAELGTQLNELESLDSLGSDRALGQTQQMSDLVDVDWNATISSYIMQQTALQASYKAFTDMQGLSLFQLSK.

This sequence belongs to the bacterial flagellin family.

Its subcellular location is the secreted. It localises to the bacterial flagellum. This Escherichia coli (strain K12) protein is Flagellar hook-associated protein 3 (flgL).